The chain runs to 154 residues: Ribonuclease H (154 aa).

Residues 1–142 (MTKHVEIFTD…CDELARTAAE (142 aa)) form the RNase H type-1 domain. Asp10, Glu48, Asp70, and Asp134 together coordinate Mg(2+).

This sequence belongs to the RNase H family. Monomer. Mg(2+) is required as a cofactor.

It is found in the cytoplasm. The enzyme catalyses Endonucleolytic cleavage to 5'-phosphomonoester.. In terms of biological role, endonuclease that specifically degrades the RNA of RNA-DNA hybrids. The polypeptide is Ribonuclease H (Vibrio campbellii (strain ATCC BAA-1116)).